The following is a 494-amino-acid chain: Ectonucleoside triphosphate diphosphohydrolase 8 (494 aa).

At 1–8 (MRLSWKER) the chain is on the cytoplasmic side. Residues 9 to 29 (VFMVLLGVAAASGLTMLILIL) traverse the membrane as a helical segment. Over 30-465 (VKATNVLLPA…LTQWRAQSYS (436 aa)) the chain is Extracellular. A disulfide bridge connects residues Cys78 and Cys102. Glu168 acts as the Proton acceptor in catalysis. An intrachain disulfide couples Cys245 to Cys291. N-linked (GlcNAc...) asparagine glycosylation is found at Asn299 and Asn303. Residues Cys328 and Cys334 are joined by a disulfide bond. Asn362 is a glycosylation site (N-linked (GlcNAc...) asparagine). Cys380 and Cys402 are disulfide-bonded. A helical transmembrane segment spans residues 466-486 (IWIAGVVFAVLTLVAILGAAA). Residues 487–494 (VQLFWTQD) lie on the Cytoplasmic side of the membrane.

It belongs to the GDA1/CD39 NTPase family. Ca(2+) serves as cofactor. It depends on Mg(2+) as a cofactor. N-glycosylated. As to expression, present in liver, and at lower level in jejunum and kidney. Limited to the canalicular domain of hepatocytes (at protein level).

Its subcellular location is the cell membrane. The catalysed reaction is a ribonucleoside 5'-triphosphate + 2 H2O = a ribonucleoside 5'-phosphate + 2 phosphate + 2 H(+). Its function is as follows. Canalicular ectonucleoside NTPDase responsible for the main hepatic NTPDase activity. Ectonucleoside NTPDases catalyze the hydrolysis of gamma- and beta-phosphate residues of nucleotides, playing a central role in concentration of extracellular nucleotides. Has activity toward ATP, ADP, UTP and UDP, but not toward AMP. In Rattus norvegicus (Rat), this protein is Ectonucleoside triphosphate diphosphohydrolase 8 (Entpd8).